The chain runs to 210 residues: Redox-sensing transcriptional repressor Rex (210 aa).

The segment at residues 17-56 (KYHRYLYELLKNDVDRISSKELSEKIGFTASQIRQDLNCF) is a DNA-binding region (H-T-H motif). 91 to 96 (GAGNIG) is an NAD(+) binding site.

The protein belongs to the transcriptional regulatory Rex family. In terms of assembly, homodimer.

The protein localises to the cytoplasm. Modulates transcription in response to changes in cellular NADH/NAD(+) redox state. The protein is Redox-sensing transcriptional repressor Rex of Clostridium botulinum (strain ATCC 19397 / Type A).